A 426-amino-acid chain; its full sequence is 3-phosphoshikimate 1-carboxyvinyltransferase (426 aa).

3-phosphoshikimate-binding residues include K21, S22, and R26. K21 serves as a coordination point for phosphoenolpyruvate. The phosphoenolpyruvate site is built by G93 and R121. 3-phosphoshikimate contacts are provided by S165, Q167, D313, and K340. Phosphoenolpyruvate is bound at residue Q167. The Proton acceptor role is filled by D313. Residues R344 and R386 each coordinate phosphoenolpyruvate.

The protein belongs to the EPSP synthase family. As to quaternary structure, monomer.

The protein localises to the cytoplasm. The catalysed reaction is 3-phosphoshikimate + phosphoenolpyruvate = 5-O-(1-carboxyvinyl)-3-phosphoshikimate + phosphate. Its pathway is metabolic intermediate biosynthesis; chorismate biosynthesis; chorismate from D-erythrose 4-phosphate and phosphoenolpyruvate: step 6/7. Its function is as follows. Catalyzes the transfer of the enolpyruvyl moiety of phosphoenolpyruvate (PEP) to the 5-hydroxyl of shikimate-3-phosphate (S3P) to produce enolpyruvyl shikimate-3-phosphate and inorganic phosphate. This is 3-phosphoshikimate 1-carboxyvinyltransferase from Solibacter usitatus (strain Ellin6076).